Consider the following 584-residue polypeptide: Poly(A) RNA polymerase protein 2 (584 aa).

Residues 1-11 (MGAKSVTASSS) show a composition bias toward polar residues. Disordered regions lie at residues 1 to 63 (MGAK…LPKD) and 81 to 147 (EGFD…QELE). Residues 12 to 35 (KKIKNRHNGKVKKSKKIKKVRKPQ) are compositionally biased toward basic residues. Residues 53 to 63 (NEQETNKLPKD) are compositionally biased toward basic and acidic residues. Acidic residues predominate over residues 130 to 139 (SEDEQAEQEE). Mg(2+) contacts are provided by Asp-236 and Asp-238. ATP-binding residues include Gly-301, Lys-326, Asn-431, and Arg-435. One can recognise a PAP-associated domain in the interval 371-431 (NLGVLLIEFF…AIQDPGDESN (61 aa)). The segment at 525–584 (TSTATATTTDDDYEITNPPAKKAKIEEKPESEPAKRNSGETYITVSSEDDDEDGYNPYTL) is disordered. Positions 547-562 (AKIEEKPESEPAKRNS) are enriched in basic and acidic residues.

This sequence belongs to the DNA polymerase type-B-like family. Component of the TRAMP complex (also called TRF4 complex) composed of at least HUL4, MTR4, PAP2/TRF4 and either AIR1 or AIR2. Interacts with NOP53 and POL2. Interacts directly with AIR2. It depends on Mg(2+) as a cofactor. Requires Mn(2+) as cofactor.

It is found in the nucleus. It catalyses the reaction RNA(n) + ATP = RNA(n)-3'-adenine ribonucleotide + diphosphate. Catalytic subunit of the TRAMP complex which has a poly(A) RNA polymerase activity and is involved in a post-transcriptional quality control mechanism limiting inappropriate expression of genetic information. Polyadenylation is required for the degradative activity of the exosome on several of its nuclear RNA substrates like cryptic transcripts generated by RNA polymerase II and III, or hypomethylated pre-tRNAi-Met. Polyadenylates RNA processing and degradation intermediates of snRNAs, snoRNAs and mRNAs that accumulate in strains lacking a functional exosome. TRF4 is also required for proper nuclear division in mitosis, DNA damage repair and sister chromatid cohesion. Involved in the regulation of histone mRNA levels. May mediate mitotic chromosome condensation. The sequence is that of Poly(A) RNA polymerase protein 2 (PAP2) from Saccharomyces cerevisiae (strain ATCC 204508 / S288c) (Baker's yeast).